Reading from the N-terminus, the 28-residue chain is Dolichyl-diphosphooligosaccharide--protein glycosyltransferase subunit 1 (28 aa).

It belongs to the OST1 family. As to quaternary structure, component of the oligosaccharyltransferase (OST) complex.

The protein localises to the endoplasmic reticulum membrane. It participates in protein modification; protein glycosylation. Functionally, subunit of the oligosaccharyl transferase (OST) complex that catalyzes the initial transfer of a defined glycan (Glc(3)Man(9)GlcNAc(2) in eukaryotes) from the lipid carrier dolichol-pyrophosphate to an asparagine residue within an Asn-X-Ser/Thr consensus motif in nascent polypeptide chains, the first step in protein N-glycosylation. N-glycosylation occurs cotranslationally and the complex associates with the Sec61 complex at the channel-forming translocon complex that mediates protein translocation across the endoplasmic reticulum (ER). All subunits are required for a maximal enzyme activity. The chain is Dolichyl-diphosphooligosaccharide--protein glycosyltransferase subunit 1 from Gallus gallus (Chicken).